The primary structure comprises 95 residues: Small ribosomal subunit protein uS17 (95 aa).

It belongs to the universal ribosomal protein uS17 family. In terms of assembly, part of the 30S ribosomal subunit.

Its function is as follows. One of the primary rRNA binding proteins, it binds specifically to the 5'-end of 16S ribosomal RNA. This Streptomyces coelicolor (strain ATCC BAA-471 / A3(2) / M145) protein is Small ribosomal subunit protein uS17.